Reading from the N-terminus, the 89-residue chain is Putative membrane protein insertion efficiency factor (89 aa).

The disordered stretch occupies residues 68–89; sequence VPPPNSDARNAPHEAEASSHRL. Over residues 77–89 the composition is skewed to basic and acidic residues; that stretch reads NAPHEAEASSHRL.

The protein belongs to the UPF0161 family.

It is found in the cell inner membrane. Could be involved in insertion of integral membrane proteins into the membrane. This Burkholderia mallei (strain SAVP1) protein is Putative membrane protein insertion efficiency factor.